The following is a 418-amino-acid chain: Inhibitor of growth protein 3 (418 aa).

Residues 127-165 form a disordered region; sequence DTPSQPVNNHHAHSHTPVEKRKYNPTSHHTTTDHIPEKK. Residues lysine 148, lysine 165, and lysine 167 each participate in a glycyl lysine isopeptide (Lys-Gly) (interchain with G-Cter in SUMO2) cross-link. Positions 156–165 are enriched in basic and acidic residues; sequence TTTDHIPEKK. The residue at position 181 (lysine 181) is an N6-acetyllysine. Lysine 256 is covalently cross-linked (Glycyl lysine isopeptide (Lys-Gly) (interchain with G-Cter in SUMO2)). Position 264 is an N6-acetyllysine (lysine 264). The disordered stretch occupies residues 286–325; the sequence is TQNASSSAADSRSGRKSKNNNKSSSQQSSSSSSSSSLSSC. Residues 305–325 are compositionally biased toward low complexity; that stretch reads NNKSSSQQSSSSSSSSSLSSC. A PHD-type zinc finger spans residues 360–409; the sequence is PRYCICNQVSYGEMVGCDNQDCPIEWFHYGCVGLTEAPKGKWYCPQCTAA. Zn(2+)-binding residues include cysteine 363, cysteine 365, cysteine 376, cysteine 381, histidine 387, cysteine 390, cysteine 403, and cysteine 406.

It belongs to the ING family. In terms of assembly, interacts with H3K4me3 and to a lesser extent with H3K4me2. Component of the NuA4 histone acetyltransferase complex which contains the catalytic subunit KAT5/TIP60 and the subunits EP400, TRRAP/PAF400, BRD8/SMAP, EPC1, DMAP1/DNMAP1, RUVBL1/TIP49, RUVBL2, ING3, actin, ACTL6A/BAF53A, MORF4L1/MRG15, MORF4L2/MRGX, MRGBP, YEATS4/GAS41, VPS72/YL1 and MEAF6. The NuA4 complex interacts with MYC and the adenovirus E1A protein. HTATTIP/TIP60, EPC1, and ING3 together constitute a minimal HAT complex termed Piccolo NuA4. Component of a SWR1-like complex. Expressed in brain, heart, kidney, liver, lung, ovaries, placenta, prostate, skeletal muscle, small intestine, spleen, testis and thymus.

It localises to the nucleus. Its function is as follows. Component of the NuA4 histone acetyltransferase (HAT) complex which is involved in transcriptional activation of select genes principally by acetylation of nucleosomal histones H4 and H2A. This modification may both alter nucleosome - DNA interactions and promote interaction of the modified histones with other proteins which positively regulate transcription. This complex may be required for the activation of transcriptional programs associated with oncogene and proto-oncogene mediated growth induction, tumor suppressor mediated growth arrest and replicative senescence, apoptosis, and DNA repair. NuA4 may also play a direct role in DNA repair when directly recruited to sites of DNA damage. Component of a SWR1-like complex that specifically mediates the removal of histone H2A.Z/H2AZ1 from the nucleosome. This chain is Inhibitor of growth protein 3 (ING3), found in Homo sapiens (Human).